A 243-amino-acid chain; its full sequence is Probable phosphatase CLD_1129 (243 aa).

9 residues coordinate Zn(2+): His-8, His-10, His-16, His-41, Glu-74, His-102, His-132, Asp-192, and His-194.

This sequence belongs to the PHP family. Zn(2+) serves as cofactor.

The chain is Probable phosphatase CLD_1129 from Clostridium botulinum (strain Okra / Type B1).